The primary structure comprises 338 residues: DNA-directed RNA polymerase subunit alpha (338 aa).

Residues 1-234 form an alpha N-terminal domain (alpha-NTD) region; that stretch reads MIHKNWAELI…DQLSIFVNFE (234 aa). The interval 250–338 is alpha C-terminal domain (alpha-CTD); the sequence is FNPLLLKKVD…DLAKRFEDQF (89 aa).

It belongs to the RNA polymerase alpha chain family. Homodimer. The RNAP catalytic core consists of 2 alpha, 1 beta, 1 beta' and 1 omega subunit. When a sigma factor is associated with the core the holoenzyme is formed, which can initiate transcription.

It carries out the reaction RNA(n) + a ribonucleoside 5'-triphosphate = RNA(n+1) + diphosphate. Its function is as follows. DNA-dependent RNA polymerase catalyzes the transcription of DNA into RNA using the four ribonucleoside triphosphates as substrates. This Cereibacter sphaeroides (strain ATCC 17029 / ATH 2.4.9) (Rhodobacter sphaeroides) protein is DNA-directed RNA polymerase subunit alpha.